The following is a 130-amino-acid chain: Small ribosomal subunit protein uS8 (130 aa).

It belongs to the universal ribosomal protein uS8 family. As to quaternary structure, part of the 30S ribosomal subunit. Contacts proteins S5 and S12.

Its function is as follows. One of the primary rRNA binding proteins, it binds directly to 16S rRNA central domain where it helps coordinate assembly of the platform of the 30S subunit. This chain is Small ribosomal subunit protein uS8, found in Shewanella frigidimarina (strain NCIMB 400).